The sequence spans 320 residues: o-succinylbenzoate synthase (320 aa).

Residue Lys133 is the Proton donor of the active site. 3 residues coordinate Mg(2+): Asp161, Glu190, and Asp213. Lys235 acts as the Proton acceptor in catalysis.

It belongs to the mandelate racemase/muconate lactonizing enzyme family. MenC type 1 subfamily. A divalent metal cation is required as a cofactor.

It carries out the reaction (1R,6R)-6-hydroxy-2-succinyl-cyclohexa-2,4-diene-1-carboxylate = 2-succinylbenzoate + H2O. Its pathway is quinol/quinone metabolism; 1,4-dihydroxy-2-naphthoate biosynthesis; 1,4-dihydroxy-2-naphthoate from chorismate: step 4/7. The protein operates within quinol/quinone metabolism; menaquinone biosynthesis. Its function is as follows. Converts 2-succinyl-6-hydroxy-2,4-cyclohexadiene-1-carboxylate (SHCHC) to 2-succinylbenzoate (OSB). The protein is o-succinylbenzoate synthase of Escherichia coli O81 (strain ED1a).